A 281-amino-acid polypeptide reads, in one-letter code: 2-dehydro-3-deoxyphosphooctonate aldolase 1 (281 aa).

The protein belongs to the KdsA family.

It is found in the cytoplasm. The catalysed reaction is D-arabinose 5-phosphate + phosphoenolpyruvate + H2O = 3-deoxy-alpha-D-manno-2-octulosonate-8-phosphate + phosphate. The protein operates within carbohydrate biosynthesis; 3-deoxy-D-manno-octulosonate biosynthesis; 3-deoxy-D-manno-octulosonate from D-ribulose 5-phosphate: step 2/3. It functions in the pathway bacterial outer membrane biogenesis; lipopolysaccharide biosynthesis. The protein is 2-dehydro-3-deoxyphosphooctonate aldolase 1 (kdsA1) of Pseudomonas putida (strain ATCC 47054 / DSM 6125 / CFBP 8728 / NCIMB 11950 / KT2440).